The following is a 347-amino-acid chain: Phosphate acyltransferase (347 aa).

It belongs to the PlsX family. As to quaternary structure, homodimer. Probably interacts with PlsY.

The protein resides in the cytoplasm. It carries out the reaction a fatty acyl-[ACP] + phosphate = an acyl phosphate + holo-[ACP]. Its pathway is lipid metabolism; phospholipid metabolism. Its function is as follows. Catalyzes the reversible formation of acyl-phosphate (acyl-PO(4)) from acyl-[acyl-carrier-protein] (acyl-ACP). This enzyme utilizes acyl-ACP as fatty acyl donor, but not acyl-CoA. The sequence is that of Phosphate acyltransferase from Pediococcus pentosaceus (strain ATCC 25745 / CCUG 21536 / LMG 10740 / 183-1w).